The sequence spans 417 residues: UDP-N-acetylglucosamine 1-carboxyvinyltransferase (417 aa).

Residue 22–23 (KN) coordinates phosphoenolpyruvate. Position 93 (R93) interacts with UDP-N-acetyl-alpha-D-glucosamine. C117 (proton donor) is an active-site residue. A 2-(S-cysteinyl)pyruvic acid O-phosphothioketal modification is found at C117. UDP-N-acetyl-alpha-D-glucosamine is bound by residues 122–126 (RPVDQ), D304, and I326.

This sequence belongs to the EPSP synthase family. MurA subfamily.

The protein localises to the cytoplasm. The catalysed reaction is phosphoenolpyruvate + UDP-N-acetyl-alpha-D-glucosamine = UDP-N-acetyl-3-O-(1-carboxyvinyl)-alpha-D-glucosamine + phosphate. The protein operates within cell wall biogenesis; peptidoglycan biosynthesis. In terms of biological role, cell wall formation. Adds enolpyruvyl to UDP-N-acetylglucosamine. This is UDP-N-acetylglucosamine 1-carboxyvinyltransferase from Laribacter hongkongensis (strain HLHK9).